We begin with the raw amino-acid sequence, 771 residues long: UPF0313 protein PSPTO_4928 (771 aa).

The 279-residue stretch at 371–649 (AYDMIRFSVN…KAFLRYHDPK (279 aa)) folds into the Radical SAM core domain. The [4Fe-4S] cluster site is built by Cys-385, Cys-389, and Cys-392. The interval 683-771 (DTYQSARRKN…KPARKPVVPR (89 aa)) is disordered. Composition is skewed to basic and acidic residues over residues 726-735 (KPWDKREEAK) and 745-754 (AAKERMDAAK). Residues 756 to 765 (GKGKGGKPAR) are compositionally biased toward basic residues.

It belongs to the UPF0313 family. The cofactor is [4Fe-4S] cluster.

The chain is UPF0313 protein PSPTO_4928 from Pseudomonas syringae pv. tomato (strain ATCC BAA-871 / DC3000).